The sequence spans 572 residues: Proline--tRNA ligase (572 aa).

It belongs to the class-II aminoacyl-tRNA synthetase family. ProS type 1 subfamily. As to quaternary structure, homodimer.

Its subcellular location is the cytoplasm. The enzyme catalyses tRNA(Pro) + L-proline + ATP = L-prolyl-tRNA(Pro) + AMP + diphosphate. Functionally, catalyzes the attachment of proline to tRNA(Pro) in a two-step reaction: proline is first activated by ATP to form Pro-AMP and then transferred to the acceptor end of tRNA(Pro). As ProRS can inadvertently accommodate and process non-cognate amino acids such as alanine and cysteine, to avoid such errors it has two additional distinct editing activities against alanine. One activity is designated as 'pretransfer' editing and involves the tRNA(Pro)-independent hydrolysis of activated Ala-AMP. The other activity is designated 'posttransfer' editing and involves deacylation of mischarged Ala-tRNA(Pro). The misacylated Cys-tRNA(Pro) is not edited by ProRS. The chain is Proline--tRNA ligase from Bacillus licheniformis (strain ATCC 14580 / DSM 13 / JCM 2505 / CCUG 7422 / NBRC 12200 / NCIMB 9375 / NCTC 10341 / NRRL NRS-1264 / Gibson 46).